Here is a 532-residue protein sequence, read N- to C-terminus: Bifunctional purine biosynthesis protein PurH (532 aa).

The region spanning 1–147 (MAKIKRALIS…KNYRSVTVVT (147 aa)) is the MGS-like domain.

The protein belongs to the PurH family.

It carries out the reaction (6R)-10-formyltetrahydrofolate + 5-amino-1-(5-phospho-beta-D-ribosyl)imidazole-4-carboxamide = 5-formamido-1-(5-phospho-D-ribosyl)imidazole-4-carboxamide + (6S)-5,6,7,8-tetrahydrofolate. The enzyme catalyses IMP + H2O = 5-formamido-1-(5-phospho-D-ribosyl)imidazole-4-carboxamide. The protein operates within purine metabolism; IMP biosynthesis via de novo pathway; 5-formamido-1-(5-phospho-D-ribosyl)imidazole-4-carboxamide from 5-amino-1-(5-phospho-D-ribosyl)imidazole-4-carboxamide (10-formyl THF route): step 1/1. Its pathway is purine metabolism; IMP biosynthesis via de novo pathway; IMP from 5-formamido-1-(5-phospho-D-ribosyl)imidazole-4-carboxamide: step 1/1. The protein is Bifunctional purine biosynthesis protein PurH of Magnetococcus marinus (strain ATCC BAA-1437 / JCM 17883 / MC-1).